The sequence spans 221 residues: Probable transaldolase (221 aa).

Catalysis depends on Lys83, which acts as the Schiff-base intermediate with substrate.

It belongs to the transaldolase family. Type 3B subfamily.

It is found in the cytoplasm. The enzyme catalyses D-sedoheptulose 7-phosphate + D-glyceraldehyde 3-phosphate = D-erythrose 4-phosphate + beta-D-fructose 6-phosphate. It participates in carbohydrate degradation; pentose phosphate pathway; D-glyceraldehyde 3-phosphate and beta-D-fructose 6-phosphate from D-ribose 5-phosphate and D-xylulose 5-phosphate (non-oxidative stage): step 2/3. Transaldolase is important for the balance of metabolites in the pentose-phosphate pathway. The sequence is that of Probable transaldolase from Petrotoga mobilis (strain DSM 10674 / SJ95).